The chain runs to 876 residues: Phosphoenolpyruvate carboxylase (876 aa).

Catalysis depends on residues His138 and Lys543.

This sequence belongs to the PEPCase type 1 family. Requires Mg(2+) as cofactor.

The catalysed reaction is oxaloacetate + phosphate = phosphoenolpyruvate + hydrogencarbonate. In terms of biological role, forms oxaloacetate, a four-carbon dicarboxylic acid source for the tricarboxylic acid cycle. The chain is Phosphoenolpyruvate carboxylase from Pseudomonas fluorescens (strain Pf0-1).